We begin with the raw amino-acid sequence, 146 residues long: MISKILCLSLLVAAVVADQVDVKDCANNEIKKVMVDGCHGSDPCIIHRGKPFTLEALFDANQNTKTAKIEIKASLDGLEIDVPGIDTNACHFMKCPLVKGQQYDIKYTWNVPKIAPKSENVVVTVKLIGDNGVLACAIATHGKIRD.

Positions 1–17 (MISKILCLSLLVAAVVA) are cleaved as a signal peptide. 3 disulfide bridges follow: cysteine 25/cysteine 136, cysteine 38/cysteine 44, and cysteine 90/cysteine 95.

Belongs to the NPC2 family.

It is found in the secreted. The protein is Mite group 2 allergen Der f 2 (DERF2) of Dermatophagoides farinae (American house dust mite).